A 664-amino-acid chain; its full sequence is 1,4-alpha-glucan branching enzyme GlgB 2 (664 aa).

The span at 1 to 17 (MGGKEMRNCKELKHEKN) shows a compositional bias: basic and acidic residues. A disordered region spans residues 1-31 (MGGKEMRNCKELKHEKNGNVTEKVGKNKGKS). Asp-342 acts as the Nucleophile in catalysis. The active-site Proton donor is Glu-395.

This sequence belongs to the glycosyl hydrolase 13 family. GlgB subfamily. As to quaternary structure, monomer.

The catalysed reaction is Transfers a segment of a (1-&gt;4)-alpha-D-glucan chain to a primary hydroxy group in a similar glucan chain.. It functions in the pathway glycan biosynthesis; glycogen biosynthesis. In terms of biological role, catalyzes the formation of the alpha-1,6-glucosidic linkages in glycogen by scission of a 1,4-alpha-linked oligosaccharide from growing alpha-1,4-glucan chains and the subsequent attachment of the oligosaccharide to the alpha-1,6 position. In Clostridium perfringens (strain 13 / Type A), this protein is 1,4-alpha-glucan branching enzyme GlgB 2 (glgB2).